Consider the following 336-residue polypeptide: Immune-associated nucleotide-binding protein 13 (336 aa).

The 207-residue stretch at 15–221 folds into the AIG1-type G domain; it reads KPERTLVLLG…YMADLSHELR (207 aa). A G1 region spans residues 24–31; it reads GRTGNGKS. GTP-binding positions include 24–32 and Ser45; that span reads GRTGNGKSA. A G2 region spans residues 51–55; the sequence is FITKE. Residues 73-76 are G3; that stretch reads DTPG. Residues 143–146 form a G4 region; that stretch reads TNED. Residues 179-181 are G5; sequence DNS. Asn180 contacts GTP. Residues 265 to 328 are a coiled coil; that stretch reads KEKISNQLKE…EKETASLRTE (64 aa).

The protein belongs to the TRAFAC class TrmE-Era-EngA-EngB-Septin-like GTPase superfamily. AIG1/Toc34/Toc159-like paraseptin GTPase family. IAN subfamily. Expressed in pollen grains.

The polypeptide is Immune-associated nucleotide-binding protein 13 (Arabidopsis thaliana (Mouse-ear cress)).